Reading from the N-terminus, the 419-residue chain is Lipoyl synthase, mitochondrial (419 aa).

The transit peptide at 1–26 (MAVCAGRLKCFGNPAVSLRTAASRAY) directs the protein to the mitochondrion. Low complexity predominate over residues 28 to 47 (TTTSPDPAIPSSSSASSSSA). The disordered stretch occupies residues 28–61 (TTTSPDPAIPSSSSASSSSALPKRPQTSFRDKLN). [4Fe-4S] cluster-binding residues include cysteine 136, cysteine 141, cysteine 147, cysteine 167, cysteine 171, cysteine 174, and serine 382. Residues 150–371 (GSSKSAATAT…KDRALEMGFL (222 aa)) enclose the Radical SAM core domain. The disordered stretch occupies residues 399–419 (AESTGPESTNVPNVTPDAIVR).

Belongs to the radical SAM superfamily. Lipoyl synthase family. It depends on [4Fe-4S] cluster as a cofactor.

It is found in the mitochondrion. It carries out the reaction [[Fe-S] cluster scaffold protein carrying a second [4Fe-4S](2+) cluster] + N(6)-octanoyl-L-lysyl-[protein] + 2 oxidized [2Fe-2S]-[ferredoxin] + 2 S-adenosyl-L-methionine + 4 H(+) = [[Fe-S] cluster scaffold protein] + N(6)-[(R)-dihydrolipoyl]-L-lysyl-[protein] + 4 Fe(3+) + 2 hydrogen sulfide + 2 5'-deoxyadenosine + 2 L-methionine + 2 reduced [2Fe-2S]-[ferredoxin]. The protein operates within protein modification; protein lipoylation via endogenous pathway; protein N(6)-(lipoyl)lysine from octanoyl-[acyl-carrier-protein]: step 2/2. Catalyzes the radical-mediated insertion of two sulfur atoms into the C-6 and C-8 positions of the octanoyl moiety bound to the lipoyl domains of lipoate-dependent enzymes, thereby converting the octanoylated domains into lipoylated derivatives. This is Lipoyl synthase, mitochondrial from Coccidioides posadasii (strain C735) (Valley fever fungus).